Here is a 55-residue protein sequence, read N- to C-terminus: Large ribosomal subunit protein bL33 (55 aa).

It belongs to the bacterial ribosomal protein bL33 family.

This Buchnera aphidicola subsp. Acyrthosiphon pisum (strain 5A) protein is Large ribosomal subunit protein bL33.